Here is a 570-residue protein sequence, read N- to C-terminus: MFS-type transporter ptmT (570 aa).

Polar residues predominate over residues methionine 1 to threonine 11. A disordered region spans residues methionine 1–glutamine 34. Helical transmembrane passes span glycine 50–leucine 70, tryptophan 94–tyrosine 114, tryptophan 121–proline 141, alanine 151–isoleucine 171, alanine 182–phenylalanine 202, tryptophan 210–methionine 230, glycine 247–leucine 267, asparagine 278–isoleucine 298, isoleucine 323–phenylalanine 343, isoleucine 356–isoleucine 376, valine 379–leucine 399, isoleucine 413–valine 433, valine 445–alanine 465, and valine 517–isoleucine 537. An N-linked (GlcNAc...) asparagine glycan is attached at asparagine 541. The tract at residues proline 550–threonine 570 is disordered. The span at glycine 561–threonine 570 shows a compositional bias: basic and acidic residues.

It belongs to the major facilitator superfamily. TCR/Tet family.

The protein localises to the cell membrane. In terms of biological role, MFS-type transporter; part of the gene cluster that mediates the biosynthesis of the indole diterpenes penitrems. May be involved in the efflux of penitrems. In Penicillium ochrochloron, this protein is MFS-type transporter ptmT.